The primary structure comprises 690 residues: MSSEGRYMTWKDMSHNKFMTDRWARVSDVVSVIKQSHAMDLSKAANLSIIKTALAGLGSGWTDNNPFVSPMTRFPQTLTMYGALVLYVNLSDPEFALIMTKVSTLTDSGLADNASANVRRDVVSGNKAESSGKTAGTNENSAYTLTVSLAGLAQALRLEELMWTRDKFEDRLKLPWTPVQGRTSPPGQXQLAAARVTAHIRAAKRALLYPGDSPEWVGWKHFYPPPPYDVYDVPPLDIINAKLAADDIGGLVTPTPASSHGLPFEVSEEVEQANRNSLWLTVGLLLAALAVGIGVAAYHRKKLQSRLRELKLLWGSTGGSGGGGGFDTELYMRATDTVSLGTTLSEHAASAPSGLRHRPAATDSGPHEALPFEVWVFDNLAVVYDSIGMSDLFYTVREFVGVFNGEFEGLIELLESPDDDDGVYTNAPRDTAIDAYESQENYDRIDIETVLIERRINLKKLLLEEAELERRERDMTMIADEEQRTLLHRLESSRVEATHAVAKAEADARAAVAMAALASKEANDYDSKMAFDRSCKEQELRLRELEVNSMPSKTERYVHTGIQGGAQLAGAMAVGAMLRRGAGSSSQTVSSGANIGSRSQSLTRGRSASQPLSSVGGSTRGVNNNISNTNLVRAGNSAEVSAGRSTNSGNSNFWSKLRVGEGWSKYSVERAATRAQRAIVLPAPPSAPAG.

A coiled-coil region spans residues 451–509 (LIERRINLKKLLLEEAELERRERDMTMIADEEQRTLLHRLESSRVEATHAVAKAEADAR). An Involved in virus transmission by the vector motif is present at residues 553–556 (KTER). The disordered stretch occupies residues 583 to 628 (GSSSQTVSSGANIGSRSQSLTRGRSASQPLSSVGGSTRGVNNNISN).

This sequence belongs to the virgaviridae capsid protein family.

The protein localises to the virion. Functionally, self-assembles to form a helical capsid wrapping up the viral genomic DNA. Its function is as follows. Minor capsid protein involved in virus transmission by the vector S.subterranea. This Beta macrocarpa (Beet) protein is Capsid readthrough protein.